We begin with the raw amino-acid sequence, 66 residues long: Disintegrin EO5B (66 aa).

The Disintegrin domain occupies 1 to 65 (NSAHPCCDPV…DCPRNPYKGK (65 aa)). Cystine bridges form between Cys6/Cys29, Cys20/Cys26, Cys25/Cys50, and Cys38/Cys57. Positions 42 to 44 (VGD) match the Cell attachment site; atypical (VGD) motif.

It belongs to the disintegrin family. Dimeric disintegrin subfamily. Heterodimer with EO4A or EO5A; disulfide-linked. As to expression, expressed by the venom gland.

Its subcellular location is the secreted. Its function is as follows. Poor inhibitor of platelet aggregation. When it dimerizes with EO4A, it inhibits the adhesion of cells expressing the RGD-dependent integrin alpha-5/beta-1 (ITGA5/ITGB1) to immobilized fibronectin. When it dimerizes with EO5A, it inhibits the adhesion of the alpha-4/beta-1 (ITGA4/ITGB1) integrin to VCAM-1. When it dimerizes either with EO4A or EO5A, the inhibition on alpha-IIb/beta-3 (ITGA2B/ITGB3) is low. This Echis ocellatus (Ocellated saw-scaled viper) protein is Disintegrin EO5B.